A 527-amino-acid polypeptide reads, in one-letter code: Bifunctional purine biosynthesis protein PurH (527 aa).

Positions Asn9–Val156 constitute an MGS-like domain.

The protein belongs to the PurH family.

It carries out the reaction (6R)-10-formyltetrahydrofolate + 5-amino-1-(5-phospho-beta-D-ribosyl)imidazole-4-carboxamide = 5-formamido-1-(5-phospho-D-ribosyl)imidazole-4-carboxamide + (6S)-5,6,7,8-tetrahydrofolate. The enzyme catalyses IMP + H2O = 5-formamido-1-(5-phospho-D-ribosyl)imidazole-4-carboxamide. Its pathway is purine metabolism; IMP biosynthesis via de novo pathway; 5-formamido-1-(5-phospho-D-ribosyl)imidazole-4-carboxamide from 5-amino-1-(5-phospho-D-ribosyl)imidazole-4-carboxamide (10-formyl THF route): step 1/1. The protein operates within purine metabolism; IMP biosynthesis via de novo pathway; IMP from 5-formamido-1-(5-phospho-D-ribosyl)imidazole-4-carboxamide: step 1/1. The chain is Bifunctional purine biosynthesis protein PurH from Mycolicibacterium paratuberculosis (strain ATCC BAA-968 / K-10) (Mycobacterium paratuberculosis).